The chain runs to 244 residues: Small ribosomal subunit protein uS3 (244 aa).

The KH type-2 domain maps to 38 to 106; sequence IRKYLNARLA…EVQINIFEVK (69 aa). Over residues 222 to 235 the composition is skewed to basic and acidic residues; that stretch reads TGRRNDNAGGNRDK. The tract at residues 222–244 is disordered; the sequence is TGRRNDNAGGNRDKNFKRKRANR.

The protein belongs to the universal ribosomal protein uS3 family. As to quaternary structure, part of the 30S ribosomal subunit. Forms a tight complex with proteins S10 and S14.

In terms of biological role, binds the lower part of the 30S subunit head. Binds mRNA in the 70S ribosome, positioning it for translation. The sequence is that of Small ribosomal subunit protein uS3 from Parabacteroides distasonis (strain ATCC 8503 / DSM 20701 / CIP 104284 / JCM 5825 / NCTC 11152).